The primary structure comprises 462 residues: Na(+)/H(+) antiporter NhaA (462 aa).

The next 11 helical transmembrane spans lie at 24-44 (ISGL…NLPL), 66-86 (LPIG…TVGL), 102-122 (AAAV…ILFL), 156-176 (GWAV…ALFA), 196-216 (LLAI…YWFI), 235-255 (PWIA…EAGI), 256-275 (HPTL…VMHG), 290-310 (PFSA…VHFE), 312-332 (MSPL…LVVG), 361-381 (MIPA…IASL), and 392-412 (ARFG…VLLS).

This sequence belongs to the NhaA Na(+)/H(+) (TC 2.A.33) antiporter family.

It is found in the cell membrane. The enzyme catalyses Na(+)(in) + 2 H(+)(out) = Na(+)(out) + 2 H(+)(in). Na(+)/H(+) antiporter that extrudes sodium in exchange for external protons. In Bifidobacterium breve (strain NCIMB 8807 / UCC2003), this protein is Na(+)/H(+) antiporter NhaA.